The chain runs to 447 residues: Tubulin beta chain (447 aa).

Residues Gln11, Glu69, Ser138, Gly142, Thr143, Gly144, Asn204, and Asn226 each coordinate GTP. Glu69 contacts Mg(2+). The interval 421–447 (EYQQYQDASISEGEEEYEEEAPMEPEE) is disordered. Over residues 432 to 447 (EGEEEYEEEAPMEPEE) the composition is skewed to acidic residues.

This sequence belongs to the tubulin family. As to quaternary structure, dimer of alpha and beta chains. A typical microtubule is a hollow water-filled tube with an outer diameter of 25 nm and an inner diameter of 15 nM. Alpha-beta heterodimers associate head-to-tail to form protofilaments running lengthwise along the microtubule wall with the beta-tubulin subunit facing the microtubule plus end conferring a structural polarity. Microtubules usually have 13 protofilaments but different protofilament numbers can be found in some organisms and specialized cells. The cofactor is Mg(2+).

The protein resides in the cytoplasm. It localises to the cytoskeleton. Tubulin is the major constituent of microtubules, a cylinder consisting of laterally associated linear protofilaments composed of alpha- and beta-tubulin heterodimers. Microtubules grow by the addition of GTP-tubulin dimers to the microtubule end, where a stabilizing cap forms. Below the cap, tubulin dimers are in GDP-bound state, owing to GTPase activity of alpha-tubulin. This Rhynchosporium secalis (Barley scald fungus) protein is Tubulin beta chain.